Reading from the N-terminus, the 209-residue chain is Probable calcium-binding protein CML36 (209 aa).

The segment at 22–59 (SKSPTAFSFGSASSSSGQDCKNSGGDGGGGSVTPTSIL) is disordered. A compositionally biased stretch (low complexity) spans 27–38 (AFSFGSASSSSG). EF-hand domains lie at 66 to 101 (YSYV…LGPD), 103 to 138 (LTEE…LDPA), 139 to 174 (RDST…IGDE), and 176 to 209 (CTLD…DLQR). Residues aspartate 79, aspartate 81, aspartate 83, and aspartate 90 each contribute to the Ca(2+) site. 8 residues coordinate Ca(2+): aspartate 152, aspartate 154, aspartate 156, glutamate 163, aspartate 189, aspartate 191, aspartate 193, and glutamate 200.

In terms of biological role, potential calcium sensor. This is Probable calcium-binding protein CML36 (CML36) from Arabidopsis thaliana (Mouse-ear cress).